The sequence spans 192 residues: Ion-translocating oxidoreductase complex subunit B (192 aa).

The tract at residues 1 to 26 (MNAIWIAVAAVSLLGLAFGAILGYAS) is hydrophobic. Positions 32–91 (EDDPVVEKIDEILPQSQCGQCGYPGCRPYAEAISCNGEKINRCAPGGEAVMLKIAELLNV) constitute a 4Fe-4S domain. [4Fe-4S] cluster is bound by residues Cys49, Cys52, Cys57, Cys74, Cys117, Cys120, Cys123, Cys127, Cys147, Cys150, Cys153, and Cys157. 4Fe-4S ferredoxin-type domains lie at 108-137 (MVAV…GATR) and 138-167 (AMHT…LQPV).

The protein belongs to the 4Fe4S bacterial-type ferredoxin family. RnfB subfamily. In terms of assembly, the complex is composed of six subunits: RsxA, RsxB, RsxC, RsxD, RsxE and RsxG. The cofactor is [4Fe-4S] cluster.

It is found in the cell inner membrane. In terms of biological role, part of a membrane-bound complex that couples electron transfer with translocation of ions across the membrane. Required to maintain the reduced state of SoxR. The protein is Ion-translocating oxidoreductase complex subunit B of Escherichia coli O127:H6 (strain E2348/69 / EPEC).